The following is a 162-amino-acid chain: 3-dehydroquinate dehydratase (162 aa).

The Proton acceptor role is filled by Y22. Residues N73, H79, and D86 each contribute to the substrate site. H99 serves as the catalytic Proton donor. Substrate is bound by residues 100–101 (LS) and R110.

This sequence belongs to the type-II 3-dehydroquinase family. Homododecamer.

It catalyses the reaction 3-dehydroquinate = 3-dehydroshikimate + H2O. It participates in metabolic intermediate biosynthesis; chorismate biosynthesis; chorismate from D-erythrose 4-phosphate and phosphoenolpyruvate: step 3/7. In terms of biological role, catalyzes a trans-dehydration via an enolate intermediate. The polypeptide is 3-dehydroquinate dehydratase (Sulfurovum sp. (strain NBC37-1)).